Reading from the N-terminus, the 163-residue chain is Nucleotide-binding protein syc0675_c (163 aa).

The protein belongs to the YajQ family.

Its function is as follows. Nucleotide-binding protein. The chain is Nucleotide-binding protein syc0675_c from Synechococcus sp. (strain ATCC 27144 / PCC 6301 / SAUG 1402/1) (Anacystis nidulans).